The following is a 615-amino-acid chain: Membrane protein insertase YidC (615 aa).

5 helical membrane-spanning segments follow: residues 9-29 (LMFIVSAFAILIGYQFFVLGP), 384-404 (LVGNFGLAILLLTVVLKLVLY), 458-478 (LPMLIQIPVFYALYKVLTVTI), 516-536 (LIGAMIAHLGVWPLLYGFTMW), and 556-576 (WFPVIFTFTLSGFAVGLVIYW).

It belongs to the OXA1/ALB3/YidC family. Type 1 subfamily. As to quaternary structure, interacts with the Sec translocase complex via SecD. Specifically interacts with transmembrane segments of nascent integral membrane proteins during membrane integration.

Its subcellular location is the cell inner membrane. Functionally, required for the insertion and/or proper folding and/or complex formation of integral membrane proteins into the membrane. Involved in integration of membrane proteins that insert both dependently and independently of the Sec translocase complex, as well as at least some lipoproteins. Aids folding of multispanning membrane proteins. The sequence is that of Membrane protein insertase YidC from Caulobacter vibrioides (strain ATCC 19089 / CIP 103742 / CB 15) (Caulobacter crescentus).